A 206-amino-acid polypeptide reads, in one-letter code: Thymidylate kinase (206 aa).

14 to 21 is a binding site for ATP; sequence GGEGIGKS.

It belongs to the thymidylate kinase family.

It catalyses the reaction dTMP + ATP = dTDP + ADP. Its function is as follows. Phosphorylation of dTMP to form dTDP in both de novo and salvage pathways of dTTP synthesis. The sequence is that of Thymidylate kinase from Rickettsia bellii (strain RML369-C).